A 379-amino-acid polypeptide reads, in one-letter code: MPTVFPDDSVGLVSPQTLHFNEPLELTSGKSLAEYDLVIETYGELNATQSNAVLICHALSGHHHAAGYHSVDERKPGWWDSCIGPGKPIDTRKFFVVALNNLGGCNGSSGPASINPATGKVYGADFPMVTVEDWVHSQARLADRLGIRQWAAVVGGSLGGMQALQWTISYPERVRHCLCIASAPKLSAQNIAFNEVARQAILSDPEFLGGYFQEQGVIPKRGLKLARMVGHITYLSDDAMGAKFGRVLKTEKLNYDLHSVEFQVESYLRYQGEEFSTRFDANTYLLMTKALDYFDPAAAHGDDLVRTLEGVEADFCLMSFTTDWRFSPARSREIVDALIAAKKNVSYLEIDAPQGHDAFLMPIPRYLQAFSGYMNRISV.

The AB hydrolase-1 domain occupies 51-360 (NAVLICHALS…DAPQGHDAFL (310 aa)). Serine 157 functions as the Nucleophile in the catalytic mechanism. Arginine 227 contributes to the substrate binding site. Residues aspartate 323 and histidine 356 contribute to the active site. Substrate is bound at residue aspartate 357.

Belongs to the AB hydrolase superfamily. MetX family. In terms of assembly, homodimer.

The protein resides in the cytoplasm. The enzyme catalyses L-homoserine + succinyl-CoA = O-succinyl-L-homoserine + CoA. Its pathway is amino-acid biosynthesis; L-methionine biosynthesis via de novo pathway; O-succinyl-L-homoserine from L-homoserine: step 1/1. Functionally, transfers a succinyl group from succinyl-CoA to L-homoserine, forming succinyl-L-homoserine. The protein is Homoserine O-succinyltransferase of Pseudomonas aeruginosa (strain UCBPP-PA14).